The chain runs to 410 residues: Argininosuccinate synthase (410 aa).

Residues 10 to 18 (AYSGGLDTS) and alanine 37 each bind ATP. The L-citrulline site is built by tyrosine 90 and serine 95. Glycine 120 contributes to the ATP binding site. Residues threonine 122, asparagine 126, and aspartate 127 each coordinate L-aspartate. An L-citrulline-binding site is contributed by asparagine 126. Arginine 130, serine 182, serine 191, glutamate 267, and tyrosine 279 together coordinate L-citrulline.

Belongs to the argininosuccinate synthase family. Type 1 subfamily. Homotetramer.

The protein resides in the cytoplasm. It catalyses the reaction L-citrulline + L-aspartate + ATP = 2-(N(omega)-L-arginino)succinate + AMP + diphosphate + H(+). The protein operates within amino-acid biosynthesis; L-arginine biosynthesis; L-arginine from L-ornithine and carbamoyl phosphate: step 2/3. The protein is Argininosuccinate synthase of Polynucleobacter asymbioticus (strain DSM 18221 / CIP 109841 / QLW-P1DMWA-1) (Polynucleobacter necessarius subsp. asymbioticus).